Reading from the N-terminus, the 296-residue chain is Glycine N-acyltransferase (296 aa).

3 positions are modified to N6-acetyllysine; alternate: lysine 16, lysine 127, and lysine 141. N6-succinyllysine; alternate is present on residues lysine 16, lysine 127, and lysine 141. Lysine 159 is subject to N6-acetyllysine. At lysine 169 the chain carries N6-succinyllysine. N6-acetyllysine; alternate occurs at positions 183 and 256. Residues lysine 183 and lysine 256 each carry the N6-succinyllysine; alternate modification.

Belongs to the glycine N-acyltransferase family. In terms of tissue distribution, predominantly expressed in liver (at protein level) and kidney. Down-regulated in hepatocellular carcinoma and other liver cancers.

It localises to the mitochondrion. The catalysed reaction is an acyl-CoA + glycine = an N-acylglycine + CoA + H(+). The enzyme catalyses benzoyl-CoA + glycine = N-benzoylglycine + CoA + H(+). Mitochondrial acyltransferase which transfers an acyl group to the N-terminus of glycine and glutamine, although much less efficiently. Can conjugate numerous substrates to form a variety of N-acylglycines, with a preference for benzoyl-CoA over phenylacetyl-CoA as acyl donors. Thereby detoxify xenobiotics, such as benzoic acid or salicylic acid, and endogenous organic acids, such as isovaleric acid. In Homo sapiens (Human), this protein is Glycine N-acyltransferase (GLYAT).